Reading from the N-terminus, the 427-residue chain is Light-independent protochlorophyllide reductase subunit N (427 aa).

Residues C30, C55, and C116 each coordinate [4Fe-4S] cluster.

It belongs to the BchN/ChlN family. As to quaternary structure, protochlorophyllide reductase is composed of three subunits; BchL, BchN and BchB. Forms a heterotetramer of two BchB and two BchN subunits. The cofactor is [4Fe-4S] cluster.

It carries out the reaction chlorophyllide a + oxidized 2[4Fe-4S]-[ferredoxin] + 2 ADP + 2 phosphate = protochlorophyllide a + reduced 2[4Fe-4S]-[ferredoxin] + 2 ATP + 2 H2O. The protein operates within porphyrin-containing compound metabolism; bacteriochlorophyll biosynthesis (light-independent). Functionally, component of the dark-operative protochlorophyllide reductase (DPOR) that uses Mg-ATP and reduced ferredoxin to reduce ring D of protochlorophyllide (Pchlide) to form chlorophyllide a (Chlide). This reaction is light-independent. The NB-protein (BchN-BchB) is the catalytic component of the complex. In Rhodopseudomonas palustris (strain BisA53), this protein is Light-independent protochlorophyllide reductase subunit N.